The sequence spans 607 residues: Threonine--tRNA ligase (607 aa).

The segment at 1 to 143 (MRVLYIHAER…SFKPEEARVA (143 aa)) is editing domain. 2 catalytic regions span residues 193 to 489 (PRYL…PRLP) and 194 to 489 (RYLD…PRLP). Zn(2+) is bound by residues cysteine 286, histidine 337, and histidine 458.

It belongs to the class-II aminoacyl-tRNA synthetase family. As to quaternary structure, homodimer. Zn(2+) is required as a cofactor.

It localises to the cytoplasm. The enzyme catalyses tRNA(Thr) + L-threonine + ATP = L-threonyl-tRNA(Thr) + AMP + diphosphate + H(+). Functionally, catalyzes the attachment of threonine to tRNA(Thr) in a two-step reaction: L-threonine is first activated by ATP to form Thr-AMP and then transferred to the acceptor end of tRNA(Thr). Also edits incorrectly charged L-seryl-tRNA(Thr). The chain is Threonine--tRNA ligase from Pyrobaculum calidifontis (strain DSM 21063 / JCM 11548 / VA1).